We begin with the raw amino-acid sequence, 251 residues long: Phosphate import ATP-binding protein PstB 2 (251 aa).

An ABC transporter domain is found at 5–246 (ITTKDVHLYY…PDKEQTADYL (242 aa)). 37-44 (GPSGCGKS) is a binding site for ATP.

This sequence belongs to the ABC transporter superfamily. Phosphate importer (TC 3.A.1.7) family. In terms of assembly, the complex is composed of two ATP-binding proteins (PstB), two transmembrane proteins (PstC and PstA) and a solute-binding protein (PstS).

It localises to the cell membrane. The catalysed reaction is phosphate(out) + ATP + H2O = ADP + 2 phosphate(in) + H(+). In terms of biological role, part of the ABC transporter complex PstSACB involved in phosphate import. Responsible for energy coupling to the transport system. This is Phosphate import ATP-binding protein PstB 2 from Ligilactobacillus salivarius (strain UCC118) (Lactobacillus salivarius).